A 77-amino-acid polypeptide reads, in one-letter code: Acyl carrier protein (77 aa).

The Carrier domain occupies 1–76 (MSLEDDVKAI…DVIKYIQERQ (76 aa)). Ser-36 carries the post-translational modification O-(pantetheine 4'-phosphoryl)serine.

This sequence belongs to the acyl carrier protein (ACP) family. 4'-phosphopantetheine is transferred from CoA to a specific serine of apo-ACP by AcpS. This modification is essential for activity because fatty acids are bound in thioester linkage to the sulfhydryl of the prosthetic group.

It localises to the cytoplasm. It functions in the pathway lipid metabolism; fatty acid biosynthesis. In terms of biological role, carrier of the growing fatty acid chain in fatty acid biosynthesis. This chain is Acyl carrier protein, found in Chlamydia trachomatis serovar A (strain ATCC VR-571B / DSM 19440 / HAR-13).